The chain runs to 320 residues: ATP-dependent 6-phosphofructokinase (320 aa).

ATP is bound at residue Gly12. ADP contacts are provided by residues Arg22–Arg26 and Arg55–Asp60. ATP contacts are provided by residues Arg73–Phe74 and Gly103–Ser106. Asp104 provides a ligand contact to Mg(2+). Thr126–Asp128 serves as a coordination point for substrate. Asp128 serves as the catalytic Proton acceptor. Position 155 (Arg155) interacts with ADP. Residues Arg163 and Met170 to Arg172 contribute to the substrate site. ADP contacts are provided by residues Gly186 to Glu188, Lys212, and Lys214 to His216. Substrate is bound by residues Glu223, Arg244, and His250 to Arg253.

The protein belongs to the phosphofructokinase type A (PFKA) family. ATP-dependent PFK group I subfamily. Prokaryotic clade 'B1' sub-subfamily. In terms of assembly, homotetramer. Mg(2+) is required as a cofactor.

It localises to the cytoplasm. It carries out the reaction beta-D-fructose 6-phosphate + ATP = beta-D-fructose 1,6-bisphosphate + ADP + H(+). The protein operates within carbohydrate degradation; glycolysis; D-glyceraldehyde 3-phosphate and glycerone phosphate from D-glucose: step 3/4. With respect to regulation, allosterically activated by ADP and other diphosphonucleosides, and allosterically inhibited by phosphoenolpyruvate. Catalyzes the phosphorylation of D-fructose 6-phosphate to fructose 1,6-bisphosphate by ATP, the first committing step of glycolysis. This is ATP-dependent 6-phosphofructokinase from Salmonella gallinarum (strain 287/91 / NCTC 13346).